We begin with the raw amino-acid sequence, 105 residues long: Small ribosomal subunit protein uS10 (105 aa).

Belongs to the universal ribosomal protein uS10 family. In terms of assembly, part of the 30S ribosomal subunit.

Functionally, involved in the binding of tRNA to the ribosomes. This Agathobacter rectalis (strain ATCC 33656 / DSM 3377 / JCM 17463 / KCTC 5835 / VPI 0990) (Eubacterium rectale) protein is Small ribosomal subunit protein uS10.